Consider the following 707-residue polypeptide: Polyribonucleotide nucleotidyltransferase (707 aa).

Positions 491 and 497 each coordinate Mg(2+). Residues 558-617 (PRIEKIKIHPDKIGLLIGPGGKTIKKISAESGAEITIEDDGTVMIYSSSADSLEAAREMI) form the KH domain. Positions 622–695 (GEVTVGGIYR…EKGRYKFSRK (74 aa)) constitute an S1 motif domain.

The protein belongs to the polyribonucleotide nucleotidyltransferase family. Mg(2+) serves as cofactor.

Its subcellular location is the cytoplasm. It catalyses the reaction RNA(n+1) + phosphate = RNA(n) + a ribonucleoside 5'-diphosphate. In terms of biological role, involved in mRNA degradation. Catalyzes the phosphorolysis of single-stranded polyribonucleotides processively in the 3'- to 5'-direction. This is Polyribonucleotide nucleotidyltransferase from Methylacidiphilum infernorum (isolate V4) (Methylokorus infernorum (strain V4)).